The following is a 356-amino-acid chain: 3-isopropylmalate dehydrogenase (356 aa).

73 to 86 (GTQYDGLPREKRPE) serves as a coordination point for NAD(+). Substrate contacts are provided by arginine 93, arginine 103, arginine 131, and aspartate 220. Residues aspartate 220, aspartate 244, and aspartate 248 each contribute to the Mg(2+) site. An NAD(+)-binding site is contributed by 278 to 290 (GSAPDIAGKGIAN).

It belongs to the isocitrate and isopropylmalate dehydrogenases family. LeuB type 1 subfamily. Homodimer. The cofactor is Mg(2+). It depends on Mn(2+) as a cofactor.

It localises to the cytoplasm. It catalyses the reaction (2R,3S)-3-isopropylmalate + NAD(+) = 4-methyl-2-oxopentanoate + CO2 + NADH. The protein operates within amino-acid biosynthesis; L-leucine biosynthesis; L-leucine from 3-methyl-2-oxobutanoate: step 3/4. Its function is as follows. Catalyzes the oxidation of 3-carboxy-2-hydroxy-4-methylpentanoate (3-isopropylmalate) to 3-carboxy-4-methyl-2-oxopentanoate. The product decarboxylates to 4-methyl-2 oxopentanoate. The polypeptide is 3-isopropylmalate dehydrogenase (Nitrosomonas europaea (strain ATCC 19718 / CIP 103999 / KCTC 2705 / NBRC 14298)).